The following is a 113-amino-acid chain: Small ribosomal subunit protein bS6 (113 aa).

Belongs to the bacterial ribosomal protein bS6 family.

Functionally, binds together with bS18 to 16S ribosomal RNA. The polypeptide is Small ribosomal subunit protein bS6 (Flavobacterium johnsoniae (strain ATCC 17061 / DSM 2064 / JCM 8514 / BCRC 14874 / CCUG 350202 / NBRC 14942 / NCIMB 11054 / UW101) (Cytophaga johnsonae)).